Consider the following 109-residue polypeptide: Large ribosomal subunit protein uL1 (109 aa).

The protein belongs to the universal ribosomal protein uL1 family. As to quaternary structure, part of the 50S ribosomal subunit.

Functionally, binds directly to 23S rRNA. The L1 stalk is quite mobile in the ribosome, and is involved in E site tRNA release. In terms of biological role, protein L1 is also a translational repressor protein, it controls the translation of the L11 operon by binding to its mRNA. This is Large ribosomal subunit protein uL1 (rplA) from Aquifex pyrophilus.